The sequence spans 490 residues: Probable cytosol aminopeptidase (490 aa).

Mn(2+)-binding residues include K258 and D263. K270 is a catalytic residue. Mn(2+) is bound by residues D282, D341, and E343. Residue R345 is part of the active site.

It belongs to the peptidase M17 family. Mn(2+) serves as cofactor.

It is found in the cytoplasm. The enzyme catalyses Release of an N-terminal amino acid, Xaa-|-Yaa-, in which Xaa is preferably Leu, but may be other amino acids including Pro although not Arg or Lys, and Yaa may be Pro. Amino acid amides and methyl esters are also readily hydrolyzed, but rates on arylamides are exceedingly low.. It carries out the reaction Release of an N-terminal amino acid, preferentially leucine, but not glutamic or aspartic acids.. Its function is as follows. Presumably involved in the processing and regular turnover of intracellular proteins. Catalyzes the removal of unsubstituted N-terminal amino acids from various peptides. This is Probable cytosol aminopeptidase from Microcystis aeruginosa (strain NIES-843 / IAM M-2473).